The sequence spans 240 residues: Uridylate kinase (240 aa).

ATP is bound at residue 12 to 15; sequence KLSG. Glycine 54 is a binding site for UMP. Glycine 55 and arginine 59 together coordinate ATP. UMP is bound by residues aspartate 74 and 135 to 142; that span reads TGNPFFTT. Threonine 162, tyrosine 168, and aspartate 171 together coordinate ATP.

It belongs to the UMP kinase family. As to quaternary structure, homohexamer.

It is found in the cytoplasm. The enzyme catalyses UMP + ATP = UDP + ADP. It functions in the pathway pyrimidine metabolism; CTP biosynthesis via de novo pathway; UDP from UMP (UMPK route): step 1/1. Inhibited by UTP. Catalyzes the reversible phosphorylation of UMP to UDP. The polypeptide is Uridylate kinase (Xanthomonas campestris pv. campestris (strain ATCC 33913 / DSM 3586 / NCPPB 528 / LMG 568 / P 25)).